Consider the following 734-residue polypeptide: Photosystem I P700 chlorophyll a apoprotein A2 (734 aa).

Transmembrane regions (helical) follow at residues 46–69, 135–158, 175–199, 273–291, 330–353, 369–395, 417–439, and 517–535; these read IFAS…FHVA, LYAG…LHLQ, LNHH…HVAI, MAHH…GHMY, LHFQ…QHMY, AALY…IFLI, AIIS…LYVH, and FLVH…LILV. [4Fe-4S] cluster contacts are provided by cysteine 559 and cysteine 568. The next 2 membrane-spanning stretches (helical) occupy residues 575 to 596 and 643 to 665; these read AFYL…YWHW and LSVW…MFLI. Positions 654, 662, and 670 each coordinate chlorophyll a. Tryptophan 671 contacts phylloquinone. A helical transmembrane segment spans residues 707–727; that stretch reads LVGLAHFSVGYIFTYAAFLIA.

The protein belongs to the PsaA/PsaB family. As to quaternary structure, the PsaA/B heterodimer binds the P700 chlorophyll special pair and subsequent electron acceptors. PSI consists of a core antenna complex that captures photons, and an electron transfer chain that converts photonic excitation into a charge separation. The eukaryotic PSI reaction center is composed of at least 11 subunits. It depends on P700 is a chlorophyll a/chlorophyll a' dimer, A0 is one or more chlorophyll a, A1 is one or both phylloquinones and FX is a shared 4Fe-4S iron-sulfur center. as a cofactor.

Its subcellular location is the plastid. It localises to the chloroplast thylakoid membrane. The catalysed reaction is reduced [plastocyanin] + hnu + oxidized [2Fe-2S]-[ferredoxin] = oxidized [plastocyanin] + reduced [2Fe-2S]-[ferredoxin]. Its function is as follows. PsaA and PsaB bind P700, the primary electron donor of photosystem I (PSI), as well as the electron acceptors A0, A1 and FX. PSI is a plastocyanin-ferredoxin oxidoreductase, converting photonic excitation into a charge separation, which transfers an electron from the donor P700 chlorophyll pair to the spectroscopically characterized acceptors A0, A1, FX, FA and FB in turn. Oxidized P700 is reduced on the lumenal side of the thylakoid membrane by plastocyanin. This is Photosystem I P700 chlorophyll a apoprotein A2 from Pinus koraiensis (Korean pine).